Reading from the N-terminus, the 182-residue chain is Pyruvoyl-dependent arginine decarboxylase (182 aa).

At serine 44 the chain carries Pyruvic acid (Ser).

The protein belongs to the PdaD family. Pyruvate is required as a cofactor.

The enzyme catalyses L-arginine + H(+) = agmatine + CO2. This chain is Pyruvoyl-dependent arginine decarboxylase, found in Thermoplasma volcanium (strain ATCC 51530 / DSM 4299 / JCM 9571 / NBRC 15438 / GSS1).